The chain runs to 233 residues: TATA-box-binding protein 1 (233 aa).

Repeat copies occupy residues 58 to 134 and 148 to 225.

This sequence belongs to the TBP family. In terms of assembly, belongs to the TFIID complex together with the TBP-associated factors (TAFs). Binds DNA as monomer.

Its subcellular location is the nucleus. Functionally, general transcription factor that functions at the core of the DNA-binding multiprotein factor TFIID. Binding of TFIID to the TATA box is the initial transcriptional step of the pre-initiation complex (PIC), playing a role in the activation of eukaryotic genes transcribed by RNA polymerase II. The polypeptide is TATA-box-binding protein 1 (TBP1) (Triticum aestivum (Wheat)).